Consider the following 631-residue polypeptide: MLYHETFDVIVVGGGHAGTEAALAAARTGQRTLLLTHNIDTLGQMSCNPAIGGIGKGHLVKEVDAMGGLMAQAIDHAGIQFRTLNASKGPAVRATRAQADRALYKAYVRNVLENTPNLTLFQQAVDDVIVEHDHIRGVVTQMGLKFHAKAVVLTVGTFLGGKIHIGLENYAGGRAGDPPSIALAHRLRELPFRVDRLKTGTPPRIDANSVDFSVLEAQHGDNPTPVFSFMGKREHHPRQIPCYITHTNERTHDVIRANLDRSPMYAGIIEGIGPRYCPSIEDKVMRFADKDSHQIFIEPEGLTTTELYPNGISTSLPFDVQVQIVRSMKGFENAHIVRPGYAIEYDFFDPRDLKQTYETKYIHGLFFAGQINGTTGYEEAAAQGLMAGLNASLYSQDKEGWSPRRDQAYMGVLIDDLSTMGTKEPYRMFTSRAEYRLLLREDNADLRLTEKARELGLVDDARWARFNQKIDNMAKERQRLQETWMNPNSVGVEQLNTLLKTPMSREASGEDLLRRPEMTYELLTTLPAFAPALEDAEAAEQVEIQVKYDGYIQRQQDEIEKSLRHEHTKLPAELDYKQVKGLSNEVVLKLNAAKPETIGIASRISGITPAAISILLVHLKKHGMLKKGEAA.

Residues 13–18 (GGGHAG), Val125, and Ser180 each bind FAD. 273 to 287 (GPRYCPSIEDKVMRF) is an NAD(+) binding site. FAD is bound at residue Gln370.

Belongs to the MnmG family. Homodimer. Heterotetramer of two MnmE and two MnmG subunits. It depends on FAD as a cofactor.

The protein localises to the cytoplasm. Functionally, NAD-binding protein involved in the addition of a carboxymethylaminomethyl (cmnm) group at the wobble position (U34) of certain tRNAs, forming tRNA-cmnm(5)s(2)U34. The sequence is that of tRNA uridine 5-carboxymethylaminomethyl modification enzyme MnmG from Vibrio cholerae serotype O1 (strain ATCC 39541 / Classical Ogawa 395 / O395).